Reading from the N-terminus, the 83-residue chain is U5-theraphotoxin-Hs1a 1 (83 aa).

Residues 1–21 (MKTSMFLTLTGLGLLFVVCYA) form the signal peptide. A propeptide spanning residues 22-49 (SESEEKEFPKELLSSIFAADSDFKVEER) is cleaved from the precursor. Intrachain disulfides connect Cys51/Cys63, Cys56/Cys68, and Cys62/Cys75.

This sequence belongs to the neurotoxin 10 (Hwtx-1) family. 51 (Hntx-8) subfamily. Hntx-8 sub-subfamily. Expressed by the venom gland.

The protein resides in the secreted. Agglutinates human and mice erythrocytes. This activity can be specifically inhibited by mannosamine. This lectin shows very low toxicity in both mammals and insects. The chain is U5-theraphotoxin-Hs1a 1 from Cyriopagopus schmidti (Chinese bird spider).